An 85-amino-acid chain; its full sequence is RNA-binding protein Hfq (85 aa).

The Sm domain maps to 10-69; that stretch reads DPFLNILRKEHVPVSIYLVNGIKLQGQIESFDQYVVLLKNTVTQMVYKHAISTVVPARPV.

This sequence belongs to the Hfq family. In terms of assembly, homohexamer.

Functionally, RNA chaperone that binds small regulatory RNA (sRNAs) and mRNAs to facilitate mRNA translational regulation in response to envelope stress, environmental stress and changes in metabolite concentrations. Also binds with high specificity to tRNAs. In Laribacter hongkongensis (strain HLHK9), this protein is RNA-binding protein Hfq.